Here is a 647-residue protein sequence, read N- to C-terminus: Threonine--tRNA ligase (647 aa).

In terms of domain architecture, TGS spans 1–61 (MIKITFPDGA…TEDGSIEIVT (61 aa)). The catalytic stretch occupies residues 242–540 (DHRKLGKELD…LIENYKGAFP (299 aa)). Positions 336, 387, and 517 each coordinate Zn(2+).

The protein belongs to the class-II aminoacyl-tRNA synthetase family. As to quaternary structure, homodimer. Zn(2+) is required as a cofactor.

The protein resides in the cytoplasm. The catalysed reaction is tRNA(Thr) + L-threonine + ATP = L-threonyl-tRNA(Thr) + AMP + diphosphate + H(+). Catalyzes the attachment of threonine to tRNA(Thr) in a two-step reaction: L-threonine is first activated by ATP to form Thr-AMP and then transferred to the acceptor end of tRNA(Thr). Also edits incorrectly charged L-seryl-tRNA(Thr). In Streptococcus gordonii (strain Challis / ATCC 35105 / BCRC 15272 / CH1 / DL1 / V288), this protein is Threonine--tRNA ligase.